The following is a 353-amino-acid chain: Type 2 DNA topoisomerase 6 subunit A (353 aa).

The Topo IIA-type catalytic domain occupies 2-138 (NRREIAINKL…LGLMPEEDGA (137 aa)). Tyrosine 96 (O-(5'-phospho-DNA)-tyrosine intermediate) is an active-site residue. Mg(2+)-binding residues include glutamate 186 and aspartate 238.

The protein belongs to the TOP6A family. In terms of assembly, homodimer. Heterotetramer of two Top6A and two Top6B chains. The cofactor is Mg(2+).

It carries out the reaction ATP-dependent breakage, passage and rejoining of double-stranded DNA.. Relaxes both positive and negative superturns and exhibits a strong decatenase activity. This Methanothermobacter thermautotrophicus (strain ATCC 29096 / DSM 1053 / JCM 10044 / NBRC 100330 / Delta H) (Methanobacterium thermoautotrophicum) protein is Type 2 DNA topoisomerase 6 subunit A.